The sequence spans 832 residues: MWPQPHLPTHPHLPTHPHLPTHPHLPTHPHLPTHPMMSKETRQSKLAEAKEQLTDHHPQTNPSVGTAASDTKKKKINNGTNPETTTSGGCHSPEDEQKASHQHQEALRRELEAQVQTIRILTCQKTELQMALYYSQHAVKQLEGEARDLISRLHDSWKFAGELEQALSAVATQKKKADRYIEELTKERDALSLELYRNTITDEELKEKNAKLQEKLQLVESEKSEIQLNVKELKRKLERAKLLLPQQQLQAEADHLGKELQSVSAKLQAQVEENELWNRLNQQQEEKMWRQEEKIQEREEKIQEQEEKIREQEEKMRRQEEMMWEKEEKMRRQEEMMWEKEEKIRELEEKMHEQEKIREQEEKRQEEEKIREQEKRQEQEAKMWRQEEKIREQEEKIREQEKKMWRQEEKIHEQEKIREEEKRQEQEEMWRQEEKIREQEEIWRQKEKMHEQEEKIRKQEEKVWRQEEKMHDQEEKIREQEEKVWRQEEKIREQEEKMWRQEEKIREQEEMWREEEKMHEQEKIWEEEKRQEQEDKMWRQEEKIREQEEKVWRQEEKIREQEEKRQEQEEKMWKQEEKIREQEEKTREQEKIREQEEKIREQEEMMQEQEEKMGEQEEKMQEQEKMRRQEEKIREQEEKIREQKEKIREQEEKIWEQEEKIREQEEMMQEQEEKMGEQEEKMWEQEEEMQEQEEKMRRQEEKIREQEKKIREQEEKIREQEEMMQEQEEKMGEQEGKMCEQEAKMQEQEEKMRRQEEKIREQEKKIREQEEKIREQEEMMQEQEEKMWEQEEKMCEQEEKMQEQEEKMRRQEEKMREQEVRLRQQEEKMQEH.

Disordered stretches follow at residues 1-107, 303-333, 351-431, 508-652, and 664-832; these read MWPQ…QEAL, QEQEEKIREQEEKMRRQEEMMWEKEEKMRRQ, MHEQ…EMWR, QEEM…EQEE, and QEEM…MQEH. Residues 13–27 show a composition bias toward basic residues; that stretch reads LPTHPHLPTHPHLPT. The segment covering 37-58 has biased composition (basic and acidic residues); it reads MSKETRQSKLAEAKEQLTDHHP. 2 stretches are compositionally biased toward polar residues: residues 59 to 69 and 77 to 89; these read QTNPSVGTAAS and NNGTNPETTTSGG. A compositionally biased stretch (basic and acidic residues) spans 92–107; that stretch reads SPEDEQKASHQHQEAL. Residues 163 to 828 adopt a coiled-coil conformation; it reads LEQALSAVAT…EVRLRQQEEK (666 aa). Composition is skewed to basic and acidic residues over residues 664-684 and 692-832; these read QEEMMQEQEEKMGEQEEKMWE and QEEK…MQEH.

This sequence belongs to the GOLGA6 family.

This Homo sapiens (Human) protein is Golgin subfamily A member 6-like protein 24.